A 387-amino-acid polypeptide reads, in one-letter code: Methionine aminopeptidase 1 (387 aa).

The residue at position 2 (Ser-2) is an N-acetylserine. A propeptide spanning residues 2 to 10 is cleaved from the precursor; sequence STATTTVTT. The C6H2-type zinc-finger motif lies at 19 to 73; that stretch reads KIYCSGLQCGRETSSQMKCPVCLKQGIVSIFCDTSCYENNYKAHKALHNAKDGLE. The Zn(2+) site is built by Cys-22, Cys-27, Cys-37, Cys-40, Cys-50, Cys-54, His-62, and His-66. Position 202 (His-202) interacts with a protein. Residues Asp-219, Asp-230, and His-294 each contribute to the Zn(2+) site. His-301 lines the a protein pocket. Zn(2+) is bound by residues Glu-327 and Glu-358.

It belongs to the peptidase M24A family. Methionine aminopeptidase type 1 subfamily. Associates with the 60S ribosomal subunit of the 80S translational complex. The cofactor is Zn(2+). It depends on Co(2+) as a cofactor. Mn(2+) is required as a cofactor. Fe(2+) serves as cofactor.

The protein localises to the cytoplasm. The enzyme catalyses Release of N-terminal amino acids, preferentially methionine, from peptides and arylamides.. Its activity is regulated as follows. In contract to the MetAP 2 isoform, is not inhibited by the fungal metabolite fumagillin, an antiangiogenic drug. Functionally, cotranslationally removes the N-terminal methionine from nascent proteins. The N-terminal methionine is often cleaved when the second residue in the primary sequence is small and uncharged (Met-Ala-, Cys, Gly, Pro, Ser, Thr, or Val). Plays the major role in N-terminal methionine removal. Less efficient when the second residue is Val. The polypeptide is Methionine aminopeptidase 1 (MAP1) (Saccharomyces cerevisiae (strain ATCC 204508 / S288c) (Baker's yeast)).